Consider the following 123-residue polypeptide: Histone H1-like protein HC1 (123 aa).

The segment at 54-123 is disordered; sequence IKAEKSGLLK…KPSKARGFRK (70 aa). A compositionally biased stretch (basic residues) spans 61-75; the sequence is LLKRKPSTKAPAKVK. Over residues 85–102 the composition is skewed to low complexity; the sequence is KSSAAAAKTSKAVKASKP. Residues 103-123 show a composition bias toward basic residues; sequence ASKKTAAKKVKKPSKARGFRK.

The protein belongs to the histone H1/H5 family. HCT subfamily.

Its function is as follows. Might have a role analogous to that of eukaryotic histone proteins. This Chlamydia pneumoniae (Chlamydophila pneumoniae) protein is Histone H1-like protein HC1 (hctA).